We begin with the raw amino-acid sequence, 457 residues long: Argininosuccinate lyase (457 aa).

The protein belongs to the lyase 1 family. Argininosuccinate lyase subfamily.

The protein resides in the cytoplasm. The catalysed reaction is 2-(N(omega)-L-arginino)succinate = fumarate + L-arginine. It functions in the pathway amino-acid biosynthesis; L-arginine biosynthesis; L-arginine from L-ornithine and carbamoyl phosphate: step 3/3. This chain is Argininosuccinate lyase, found in Erwinia tasmaniensis (strain DSM 17950 / CFBP 7177 / CIP 109463 / NCPPB 4357 / Et1/99).